The primary structure comprises 917 residues: Probable dipeptidyl-aminopeptidase B (917 aa).

A disordered region spans residues 1-78 (MGVEKRINDE…EGDLEEGFVP (78 aa)). Topologically, residues 1–90 (MGVEKRINDE…GGWSAPRKVS (90 aa)) are cytoplasmic. The segment covering 16–26 (AERDDKSRDSI) has biased composition (basic and acidic residues). Positions 27 to 49 (DSTSTASISLALLGGANGSAHGS) are enriched in low complexity. Basic and acidic residues predominate over residues 55 to 65 (RKSENQEKYHD). Residues 91–111 (VIFTLIVTLCIAGWLVAFFVL) form a helical; Signal-anchor for type II membrane protein membrane-spanning segment. Residues 112 to 917 (LGRHKDSSKD…LGLINILRNG (806 aa)) are Vacuolar-facing. N-linked (GlcNAc...) asparagine glycans are attached at residues N350 and N465. S754 serves as the catalytic Charge relay system. N813 carries N-linked (GlcNAc...) asparagine glycosylation. Active-site charge relay system residues include D831 and H864.

It belongs to the peptidase S9B family.

The protein localises to the vacuole membrane. It carries out the reaction Release of an N-terminal dipeptide, Xaa-Yaa-|-Zaa-, from a polypeptide, preferentially when Yaa is Pro, provided Zaa is neither Pro nor hydroxyproline.. Its function is as follows. Type IV dipeptidyl-peptidase which removes N-terminal dipeptides sequentially from polypeptides having unsubstituted N-termini provided that the penultimate residue is proline. In Coccidioides posadasii (strain C735) (Valley fever fungus), this protein is Probable dipeptidyl-aminopeptidase B (DAPB).